Here is a 540-residue protein sequence, read N- to C-terminus: Chaperonin GroEL (540 aa).

Residues 30–33 (TLGP), K51, 87–91 (DGTTT), G415, and D495 each bind ATP.

This sequence belongs to the chaperonin (HSP60) family. Forms a cylinder of 14 subunits composed of two heptameric rings stacked back-to-back. Interacts with the co-chaperonin GroES.

It is found in the cytoplasm. It catalyses the reaction ATP + H2O + a folded polypeptide = ADP + phosphate + an unfolded polypeptide.. Its function is as follows. Together with its co-chaperonin GroES, plays an essential role in assisting protein folding. The GroEL-GroES system forms a nano-cage that allows encapsulation of the non-native substrate proteins and provides a physical environment optimized to promote and accelerate protein folding. The polypeptide is Chaperonin GroEL (Rhodothermus marinus (Rhodothermus obamensis)).